The primary structure comprises 75 residues: uncharacterized protein (75 aa).

Residues 7-26 traverse the membrane as a helical segment; that stretch reads ATAPLFVIVGLAVVLTGATG.

It localises to the membrane. This is an uncharacterized protein from Dictyostelium discoideum (Social amoeba).